Reading from the N-terminus, the 422-residue chain is UDP-N-acetylglucosamine 1-carboxyvinyltransferase (422 aa).

Position 22–23 (22–23 (KN)) interacts with phosphoenolpyruvate. Arginine 94 provides a ligand contact to UDP-N-acetyl-alpha-D-glucosamine. Cysteine 118 serves as the catalytic Proton donor. Cysteine 118 carries the 2-(S-cysteinyl)pyruvic acid O-phosphothioketal modification. Residues 123 to 127 (RPIDL), aspartate 309, and leucine 331 each bind UDP-N-acetyl-alpha-D-glucosamine.

It belongs to the EPSP synthase family. MurA subfamily.

It localises to the cytoplasm. It carries out the reaction phosphoenolpyruvate + UDP-N-acetyl-alpha-D-glucosamine = UDP-N-acetyl-3-O-(1-carboxyvinyl)-alpha-D-glucosamine + phosphate. The protein operates within cell wall biogenesis; peptidoglycan biosynthesis. Cell wall formation. Adds enolpyruvyl to UDP-N-acetylglucosamine. In Sulfurimonas denitrificans (strain ATCC 33889 / DSM 1251) (Thiomicrospira denitrificans (strain ATCC 33889 / DSM 1251)), this protein is UDP-N-acetylglucosamine 1-carboxyvinyltransferase.